Consider the following 612-residue polypeptide: UvrABC system protein C (612 aa).

The GIY-YIG domain maps to 13–92; that stretch reads AKPGVYIMHD…IKEHRPKYNT (80 aa). Residues 204–239 enclose the UVR domain; the sequence is KKIMDRLTTQMQEASEKMEYEEAARYRDLLMSVKQV.

It belongs to the UvrC family. In terms of assembly, interacts with UvrB in an incision complex.

It localises to the cytoplasm. Functionally, the UvrABC repair system catalyzes the recognition and processing of DNA lesions. UvrC both incises the 5' and 3' sides of the lesion. The N-terminal half is responsible for the 3' incision and the C-terminal half is responsible for the 5' incision. This Lachnospira eligens (strain ATCC 27750 / DSM 3376 / VPI C15-48 / C15-B4) (Eubacterium eligens) protein is UvrABC system protein C.